Consider the following 162-residue polypeptide: Phospholipase A2 (162 aa).

The signal sequence occupies residues 1 to 22 (MKVLQMFFCVILLCVTSVLVEA). Residues 23-35 (KSTTKGDETASKR) constitute a propeptide that is removed on maturation. Cystine bridges form between Cys-60-Cys-155, Cys-62-Cys-78, Cys-77-Cys-134, Cys-84-Cys-127, Cys-94-Cys-120, and Cys-113-Cys-125. Tyr-61, Gly-63, and Gly-65 together coordinate Ca(2+). The active site involves His-81. Asp-82 lines the Ca(2+) pocket. Residue Asp-128 is part of the active site.

The protein belongs to the phospholipase A2 family. Group I subfamily. D49 sub-subfamily. It depends on Ca(2+) as a cofactor. In terms of tissue distribution, expressed both outside and in acontia, a specialised envenomation structure laden with batteries of venom-containing nematocysts found only in the superfamily Metridioidea.

The protein resides in the secreted. Its subcellular location is the nematocyst. The catalysed reaction is a 1,2-diacyl-sn-glycero-3-phosphocholine + H2O = a 1-acyl-sn-glycero-3-phosphocholine + a fatty acid + H(+). In terms of biological role, PLA2 catalyzes the calcium-dependent hydrolysis of the 2-acyl groups in 3-sn-phosphoglycerides. This Calliactis polypus (Hermit crab anemone) protein is Phospholipase A2.